Reading from the N-terminus, the 686-residue chain is MAKVNLIESPYSLLQLKGIGPKKIEVLQQLNIHTVEDLVLYLPTRYEDNTVIDLNQAEDQSNVTIEGQVYTAPVVAFFGRNKSKLTVHLMVNNIAVKCIFFNQPYLKKKIELNQTITVKGKWNRVKQEITGNRVFFNSQGTQTQENADVQLEPVYRIKEGIKQKQIRDQIRQALNDVTIHEWLTDELREKYKLETLDFTLNTLHHPKSKEDLLRARRTYAFTELFLFELRMQWLNRLEKSSDEAIEIDYDIDQVKSFIDRLPFELTEAQKSSVNEIFRDLKAPIRMHRLLQGDVGSGKTVVAAICMYALKTAGYQSALMVPTEILAEQHAESLMALFGDSMNVALLTGSVKGKKRKILLEQLENGTIDCLIGTHALIQDDVIFHNVGLVITDEQHRFGVNQRQLLREKGAMTNVLFMTATPIPRTLAISVFGEMDVSSIKQLPKGRKPIITTWAKHEQYDKVLMQMTSELKKGRQAYVICPLIESSEHLEDVQNVVALYESLQQYYGVSRVGLLHGKLSADEKDEVMQKFSNHEINVLVSTTVVEVGVNVPNATFMMIYDADRFGLSTLHQLRGRVGRSDQQSYCVLIASPKTETGIERMTIMTQTTDGFELSERDLEMRGPGDFFGVKQSGLPDFLVANLVEDYRMLEVARDEAAELIQSGVFFENTYQHLRHFVEENLLHRSFD.

A wedge domain region spans residues 50–149 (TVIDLNQAED…GTQTQENADV (100 aa)). Residues 279–439 (DLKAPIRMHR…VFGEMDVSSI (161 aa)) form the Helicase ATP-binding domain. 292-299 (GDVGSGKT) contacts ATP. The short motif at 392–395 (DEQH) is the DEAH box element. Positions 462–618 (VLMQMTSELK…GFELSERDLE (157 aa)) constitute a Helicase C-terminal domain.

This sequence belongs to the helicase family. RecG subfamily. As to quaternary structure, monomer.

It carries out the reaction Couples ATP hydrolysis with the unwinding of duplex DNA by translocating in the 3'-5' direction.. The catalysed reaction is ATP + H2O = ADP + phosphate + H(+). Its function is as follows. Plays a critical role in recombination and DNA repair. Helps process Holliday junction intermediates to mature products by catalyzing branch migration. Has replication fork regression activity, unwinds stalled or blocked replication forks to make a HJ that can be resolved. Has a DNA unwinding activity characteristic of a DNA helicase with 3'-5' polarity. The polypeptide is ATP-dependent DNA helicase RecG (Staphylococcus aureus (strain NCTC 8325 / PS 47)).